The sequence spans 266 residues: Chymotrypsin-like elastase family member 1 (266 aa).

A signal peptide spans 1–16 (MLRFLVFASLVLYGHS). A propeptide spans 17-26 (TQDFPETNAR) (activation peptide). Residues 27–264 (VVGGAEARRN…YISWMNNVIA (238 aa)) form the Peptidase S1 domain. Cysteine 56 and cysteine 72 are disulfide-bonded. The active-site Charge relay system is the histidine 71. The Ca(2+) site is built by aspartate 85, asparagine 87, glutamine 90, and glutamate 95. The active-site Charge relay system is aspartate 119. 3 disulfide bridges follow: cysteine 153-cysteine 220, cysteine 184-cysteine 200, and cysteine 210-cysteine 240. The Charge relay system role is filled by serine 214.

It belongs to the peptidase S1 family. Elastase subfamily. It depends on Ca(2+) as a cofactor. Pancreas.

The protein localises to the secreted. It carries out the reaction Hydrolysis of proteins, including elastin. Preferential cleavage: Ala-|-Xaa.. Functionally, serine proteases that hydrolyze many proteins in addition to elastin. This Rattus norvegicus (Rat) protein is Chymotrypsin-like elastase family member 1 (Cela1).